The chain runs to 418 residues: Nuclear hormone receptor 114 (418 aa).

The nuclear receptor DNA-binding region spans 12–87 (DHVCLVCQDF…VGMDRNALQQ (76 aa)). 2 NR C4-type zinc fingers span residues 15-35 (CLVC…CVGC) and 51-70 (CQFE…CRYC). The tract at residues 89–130 (RDPIGYTKRTRRPKKELKTTSDCSSDEGASTPPSVSPLQLSP) is disordered. An NR LBD domain is found at 170-409 (PIRSLHEALC…AFARQLFFGD (240 aa)). Residues 398–409 (FSAFARQLFFGD) form an AF-2 region.

This sequence belongs to the nuclear hormone receptor family. In terms of tissue distribution, expressed in germ and intestinal cells and at low levels in the hypodermis.

Its subcellular location is the nucleus. In terms of biological role, probable transcription factor which may have a role in detoxifying dietary metabolites arising from bacterial tryptophan metabolism. Required for fertility and involved in proper postembryonic germline development, especially germline stem cell (GSC) proliferation. Required for activation of the methionine/S-adenosylmethionine (Met/SAM) cycle in response to low levels of SAM. The sequence is that of Nuclear hormone receptor 114 from Caenorhabditis elegans.